A 380-amino-acid chain; its full sequence is Crotonobetainyl-CoA reductase (380 aa).

It belongs to the acyl-CoA dehydrogenase family. Homotetramer. Requires FAD as cofactor.

It is found in the cytoplasm. It catalyses the reaction 4-(trimethylamino)butanoyl-CoA + oxidized [electron-transfer flavoprotein] + H(+) = crotonobetainyl-CoA + reduced [electron-transfer flavoprotein]. It functions in the pathway amine and polyamine metabolism; carnitine metabolism. Its function is as follows. Catalyzes the reduction of crotonobetainyl-CoA to gamma-butyrobetainyl-CoA. This Shigella flexneri serotype 5b (strain 8401) protein is Crotonobetainyl-CoA reductase.